The primary structure comprises 326 residues: MLSPERLALPDYEYLAQRHVLTYVEDAVCQLLENKEDISQYGIARFFTEYFNSVCQGTHILFREFSFIQATPHNRASFLRAFWRCFRTVGKNGDLLTMREYHCLLQLLCPDFPLELTQKAARIVLMDDAMDCLMSFSDFLFAFQIQFYYSEFLESVAAIYQDLLSGKNPNTVIVPTSSSGQHRHRPSTGEAGTPEGVEASLFYQCLENLCDRHKYSCPPPALVKEVLSNVQRLTFYGFLVALSKHHGINQALGALPDKGDLMHDPAMDEELERLVLRWRPHRSSRQHRAKEPGAFGYQRRDKLEALQTVPPASAPTPCLYQWEPIE.

The required for interaction with PCM1 stretch occupies residues 1-111; it reads MLSPERLALP…HCLLQLLCPD (111 aa). The interval 1–225 is required for interaction with TPGS1, LRRC49, and TTLL1; that stretch reads MLSPERLALP…SCPPPALVKE (225 aa).

This sequence belongs to the CSTPP1 family. In terms of assembly, interacts with PCM1. Interacts with TTLL1, TPGS1, TPGS2 and LRRC49; the interactions link CSTPP1 to the complex TPGC. Binds to alpha-tubulin.

The protein resides in the cytoplasm. It localises to the cytoskeleton. Its subcellular location is the microtubule organizing center. It is found in the centrosome. The protein localises to the centriolar satellite. Regulator of the tubulin polyglutamylase complex (TPGC) that controls cytoskeletal organization, nuclear shape, and cilium disassembly by balancing microtubule and actin assembly. Regulates the assembly and stability of the TPGC and thereby modulates polyglutamylation of the microtubule, which antagonizes MAP4 binding. The polypeptide is Centriolar satellite-associated tubulin polyglutamylase complex regulator 1 (CSTPP1) (Bos taurus (Bovine)).